Reading from the N-terminus, the 737-residue chain is Elongation factor 2 (737 aa).

In terms of domain architecture, tr-type G spans 18–262; the sequence is TRVRNIGIIA…TVIKFVPNPR (245 aa). Residues 27–34, 93–97, and 147–150 each bind GTP; these read AHVDHGKT, DTPGH, and NKVD. Position 604 is a diphthamide (histidine 604).

It belongs to the TRAFAC class translation factor GTPase superfamily. Classic translation factor GTPase family. EF-G/EF-2 subfamily.

It is found in the cytoplasm. Catalyzes the GTP-dependent ribosomal translocation step during translation elongation. During this step, the ribosome changes from the pre-translocational (PRE) to the post-translocational (POST) state as the newly formed A-site-bound peptidyl-tRNA and P-site-bound deacylated tRNA move to the P and E sites, respectively. Catalyzes the coordinated movement of the two tRNA molecules, the mRNA and conformational changes in the ribosome. This chain is Elongation factor 2 (fusA), found in Sulfurisphaera tokodaii (strain DSM 16993 / JCM 10545 / NBRC 100140 / 7) (Sulfolobus tokodaii).